We begin with the raw amino-acid sequence, 156 residues long: Transcriptional repressor NrdR (156 aa).

The segment at 3 to 34 (CPYCGHLEDRVVDSRETQDGQATRRRRACLSC) is a zinc-finger region. The ATP-cone domain maps to 49–139 (PQVVKKDGRR…VYRAFRDVGE (91 aa)).

It belongs to the NrdR family. Requires Zn(2+) as cofactor.

Functionally, negatively regulates transcription of bacterial ribonucleotide reductase nrd genes and operons by binding to NrdR-boxes. The chain is Transcriptional repressor NrdR from Anaeromyxobacter dehalogenans (strain 2CP-C).